A 282-amino-acid polypeptide reads, in one-letter code: Glutamate--LysW ligase ArgX (282 aa).

ATP is bound by residues Lys-87, Lys-127, 131-137 (GSWGRLV), and 167-178 (QEYINYKSRDIR). Positions 91-277 (YSKLYREGIP…VAEELVSYVK (187 aa)) constitute an ATP-grasp domain. Arg-192 is a substrate binding site. Asn-202 provides a ligand contact to ATP. 203–204 (IA) contributes to the substrate binding site. Mg(2+) is bound by residues Asp-237, Glu-250, and Asn-252. 256-260 (EFKGF) is a binding site for substrate. The GF motif that is essential for ArgX substrate specificity motif lies at 259–260 (GF).

Belongs to the RimK family. LysX subfamily. In terms of assembly, homotetramer. Interacts with LysW. Requires Mg(2+) as cofactor.

It catalyses the reaction [amino-group carrier protein]-C-terminal-L-glutamate + L-glutamate + ATP = [amino-group carrier protein]-C-terminal-gamma-(L-glutamyl)-L-glutamate + ADP + phosphate + H(+). It participates in amino-acid biosynthesis; L-arginine biosynthesis. In terms of biological role, catalyzes the ATP-dependent formation of a covalent bond between the amino group of glutamate and the gamma-carboxyl group of the C-terminal glutamate residue in LysW. The protein is Glutamate--LysW ligase ArgX of Sulfolobus acidocaldarius (strain ATCC 33909 / DSM 639 / JCM 8929 / NBRC 15157 / NCIMB 11770).